A 201-amino-acid polypeptide reads, in one-letter code: Holliday junction branch migration complex subunit RuvA (201 aa).

Residues 1-64 form a domain I region; sequence MIGRLYGKII…EDAHLLFGFA (64 aa). A domain II region spans residues 65–143; it reads QKQDRTLFRE…GIAQTDFFVE (79 aa). The flexible linker stretch occupies residues 144-154; that stretch reads HSHETMVATYE. A domain III region spans residues 154–201; sequence EIDASEEARDALLALGYKLTDAEKMIKKVHKSGATSEQLIRDALKASL.

Belongs to the RuvA family. In terms of assembly, homotetramer. Forms an RuvA(8)-RuvB(12)-Holliday junction (HJ) complex. HJ DNA is sandwiched between 2 RuvA tetramers; dsDNA enters through RuvA and exits via RuvB. An RuvB hexamer assembles on each DNA strand where it exits the tetramer. Each RuvB hexamer is contacted by two RuvA subunits (via domain III) on 2 adjacent RuvB subunits; this complex drives branch migration. In the full resolvosome a probable DNA-RuvA(4)-RuvB(12)-RuvC(2) complex forms which resolves the HJ.

It is found in the cytoplasm. Its function is as follows. The RuvA-RuvB-RuvC complex processes Holliday junction (HJ) DNA during genetic recombination and DNA repair, while the RuvA-RuvB complex plays an important role in the rescue of blocked DNA replication forks via replication fork reversal (RFR). RuvA specifically binds to HJ cruciform DNA, conferring on it an open structure. The RuvB hexamer acts as an ATP-dependent pump, pulling dsDNA into and through the RuvAB complex. HJ branch migration allows RuvC to scan DNA until it finds its consensus sequence, where it cleaves and resolves the cruciform DNA. In Haemophilus ducreyi (strain 35000HP / ATCC 700724), this protein is Holliday junction branch migration complex subunit RuvA.